The chain runs to 105 residues: uncharacterized protein (105 aa).

The next 3 helical transmembrane spans lie at 3 to 23, 41 to 61, and 63 to 83; these read ISPL…QALF, DLVN…ALVS, and AFPV…TFIY.

Its subcellular location is the cell membrane. This is an uncharacterized protein from Methanocaldococcus jannaschii (strain ATCC 43067 / DSM 2661 / JAL-1 / JCM 10045 / NBRC 100440) (Methanococcus jannaschii).